Consider the following 356-residue polypeptide: Methylthioribose-1-phosphate isomerase (356 aa).

Substrate contacts are provided by residues Arg-53 to Ala-55, Arg-97, and Gln-203. Catalysis depends on Asp-244, which acts as the Proton donor. A substrate-binding site is contributed by Asn-254–Lys-255.

The protein belongs to the eIF-2B alpha/beta/delta subunits family. MtnA subfamily.

It carries out the reaction 5-(methylsulfanyl)-alpha-D-ribose 1-phosphate = 5-(methylsulfanyl)-D-ribulose 1-phosphate. It functions in the pathway amino-acid biosynthesis; L-methionine biosynthesis via salvage pathway; L-methionine from S-methyl-5-thio-alpha-D-ribose 1-phosphate: step 1/6. Catalyzes the interconversion of methylthioribose-1-phosphate (MTR-1-P) into methylthioribulose-1-phosphate (MTRu-1-P). This Rhodopirellula baltica (strain DSM 10527 / NCIMB 13988 / SH1) protein is Methylthioribose-1-phosphate isomerase.